The sequence spans 994 residues: Alpha-mannosidase F (994 aa).

The signal sequence occupies residues 1–20; the sequence is MKNFYYFILILLFFNEVCYS. Positions 35, 37, and 151 each coordinate Zn(2+). Aspartate 151 functions as the Nucleophile in the catalytic mechanism. Asparagine 247 and asparagine 381 each carry an N-linked (GlcNAc...) asparagine glycan. Residue histidine 392 coordinates Zn(2+). Asparagine 554, asparagine 712, and asparagine 932 each carry an N-linked (GlcNAc...) asparagine glycan.

Belongs to the glycosyl hydrolase 38 family. Zn(2+) is required as a cofactor.

It is found in the secreted. The enzyme catalyses Hydrolysis of terminal, non-reducing alpha-D-mannose residues in alpha-D-mannosides.. In Dictyostelium discoideum (Social amoeba), this protein is Alpha-mannosidase F (manF).